The following is a 133-amino-acid chain: Putative redox protein FMP46, mitochondrial (133 aa).

A mitochondrion-targeting transit peptide spans 1–21 (MSFWKTLQRQPRTISLFTNDI). The active site involves cysteine 97.

Belongs to the FMP46 family.

The protein resides in the mitochondrion. Its function is as follows. Putative mitochondrial redox protein which could be involved in the reduction of small toxic molecules. In Saccharomyces cerevisiae (strain ATCC 204508 / S288c) (Baker's yeast), this protein is Putative redox protein FMP46, mitochondrial (FMP46).